A 162-amino-acid polypeptide reads, in one-letter code: Caveolin-2 (162 aa).

Residues 1–86 (MGLETEKADV…FEVSKYVIYK (86 aa)) are Cytoplasmic-facing. Tyrosine 19 bears the Phosphotyrosine; by SRC mark. 3 positions are modified to phosphoserine: serine 20, serine 23, and serine 36. The helical intramembrane region spans 87 to 107 (FLTLLLAMPMAFAAGVLFATL). Residues 108-162 (SCLHIWIIMPFVKTCLMVLPSVQTIWKSVTDAVIAPLCSSVGRSFSSVSLQVSHD) lie on the Cytoplasmic side of the membrane.

It belongs to the caveolin family. In terms of assembly, monomer or homodimer. Interacts with CAV1; the interaction forms a stable heterooligomeric complex that is required for targeting to lipid rafts and for caveolae formation. Tyrosine phosphorylated forms do not form heterooligomers with the Tyr-19-phosphorylated form existing as a monomer or dimer. Interacts (tyrosine phosphorylated form) with the SH2 domain-containing proteins, RASA1, NCK1 and SRC. Interacts (tyrosine phosphorylated form) with INSR. Interacts (Tyr-19 phosphorylated form) with MAPK1 (phosphorylated form); the interaction, promoted by insulin, leads to nuclear location and MAPK1 activation. Interacts with STAT3; the interaction is increased on insulin-induced tyrosine phosphorylation leading to STAT activation. Phosphorylated on serine and tyrosine residues. CAV1 promotes phosphorylation on Ser-23 which then targets the complex to the plasma membrane, lipid rafts and caveolae. Phosphorylation on Ser-36 appears to modulate mitosis in endothelial cells. Phosphorylation on Tyr-19 is required for insulin-induced phosphorylation of MAPK1 and DNA binding of STAT3. Tyrosine phosphorylation is induced by both EGF and insulin.

It is found in the nucleus. Its subcellular location is the cytoplasm. It localises to the golgi apparatus membrane. The protein resides in the cell membrane. The protein localises to the membrane. It is found in the caveola. In terms of biological role, may act as a scaffolding protein within caveolar membranes. Interacts directly with G-protein alpha subunits and can functionally regulate their activity. Acts as an accessory protein in conjunction with CAV1 in targeting to lipid rafts and driving caveolae formation. The Ser-36 phosphorylated form has a role in modulating mitosis in endothelial cells. Positive regulator of cellular mitogenesis of the MAPK signaling pathway. Required for the insulin-stimulated nuclear translocation and activation of MAPK1 and STAT3, and the subsequent regulation of cell cycle progression. This Canis lupus familiaris (Dog) protein is Caveolin-2 (CAV2).